Reading from the N-terminus, the 240-residue chain is Manganese transport system ATP-binding protein MntB (240 aa).

The ABC transporter domain maps to 1 to 233 (MEIQGLTIAY…KIQFAYGDAP (233 aa)). Residue 33–40 (GPNGAGKS) coordinates ATP.

The protein belongs to the ABC transporter superfamily.

It localises to the cell membrane. Functionally, this protein is probably a component of a manganese permease, a binding protein-dependent, ATP-driven transport system. Probably responsible for energy coupling to the transport system. The chain is Manganese transport system ATP-binding protein MntB (mntB) from Listeria monocytogenes serovar 1/2a (strain ATCC BAA-679 / EGD-e).